Here is a 349-residue protein sequence, read N- to C-terminus: Phosphate acyltransferase (349 aa).

The protein belongs to the PlsX family. As to quaternary structure, homodimer. Probably interacts with PlsY.

The protein resides in the cytoplasm. It catalyses the reaction a fatty acyl-[ACP] + phosphate = an acyl phosphate + holo-[ACP]. The protein operates within lipid metabolism; phospholipid metabolism. Its function is as follows. Catalyzes the reversible formation of acyl-phosphate (acyl-PO(4)) from acyl-[acyl-carrier-protein] (acyl-ACP). This enzyme utilizes acyl-ACP as fatty acyl donor, but not acyl-CoA. In Rhodopseudomonas palustris (strain BisA53), this protein is Phosphate acyltransferase.